The primary structure comprises 342 residues: Alpha-(1,3)-fucosyltransferase 7 (342 aa).

The Cytoplasmic segment spans residues 1-14; the sequence is MNNAGHGPTRRLRG. Residues 15–36 traverse the membrane as a helical; Signal-anchor for type II membrane protein segment; the sequence is LGVLAGVALLAALWLLWLLGSA. At 37–342 the chain is on the lumenal side; the sequence is PRGTPAPQPT…YEDLEGWFQA (306 aa). A disulfide bridge connects residues Cys68 and Cys76. N-linked (GlcNAc...) asparagine glycosylation is present at Asn81. Cysteines 211 and 214 form a disulfide. Asn291 carries an N-linked (GlcNAc...) asparagine glycan. A disulfide bond links Cys318 and Cys321.

Belongs to the glycosyltransferase 10 family. In terms of processing, N-glycosylated. In terms of tissue distribution, leukocytic/myeloid lineage cells.

Its subcellular location is the golgi apparatus. The protein resides in the golgi stack membrane. It catalyses the reaction an N-acetyl-alpha-neuraminyl-(2-&gt;3)-beta-D-galactosyl-(1-&gt;4)-N-acetyl-beta-D-glucosaminyl derivative + GDP-beta-L-fucose = an alpha-Neu5Ac-(2-&gt;3)-beta-D-Gal-(1-&gt;4)-[alpha-L-Fuc-(1-&gt;3)]-beta-D-GlcNAc derivative + GDP + H(+). It carries out the reaction a neolactoside IV(3)-alpha-NeuAc-nLc4Cer + GDP-beta-L-fucose = a neolactoside IV(3)-alpha-NeuNAc,III(3)-alpha-Fuc-nLc4Cer + GDP + H(+). The catalysed reaction is a neolactoside VI(3)-alpha-NeuNAc-nLc6Cer + GDP-beta-L-fucose = a neolactoside VI(3)-alpha-NeuAc,V(3)-alphaFuc-nLc6Cer + GDP + H(+). The enzyme catalyses an alpha-Neu5Ac-(2-&gt;3)-beta-D-Gal-(1-&gt;4)-beta-D-GlcNAc-(1-&gt;3)-beta-D-Gal-(1-&gt;4)-[alpha-L-Fuc-(1-&gt;3)]-beta-D-GlcNAc derivative + GDP-beta-L-fucose = an alpha-Neu5Ac-(2-&gt;3)-beta-D-Gal-(1-&gt;4)-[alpha-L-Fuc-(1-&gt;3)]-beta-D-GlcNAc-(1-&gt;3)-beta-D-Gal-(1-&gt;4)-[alpha-L-Fuc-(1-&gt;3)]-beta-D-GlcNAc derivative + GDP + H(+). It catalyses the reaction an alpha-Neu5Ac-(2-&gt;3)-beta-D-Gal-(1-&gt;4)-beta-D-GlcNAc6S derivative + GDP-beta-L-fucose = an alpha-Neu5Ac-(2-&gt;3)-beta-D-Gal-(1-&gt;4)-[alpha-L-Fuc-(1-&gt;3)]-beta-D-GlcNAc6S derivative + GDP + H(+). It carries out the reaction alpha-Neu5Ac-(2-&gt;3)-beta-D-Gal-(1-&gt;4)-beta-D-GlcNAc-(1-&gt;3)-beta-D-Gal-(1-&gt;4)-D-Glc + GDP-beta-L-fucose = alpha-Neu5Ac-(2-&gt;3)-beta-D-Gal-(1-&gt;4)-[alpha-L-Fuc-(1-&gt;3)]-beta-D-GlcNAc-(1-&gt;3)-beta-D-Gal-(1-&gt;4)-D-Glc + GDP + H(+). The catalysed reaction is alpha-Neu5Ac-(2-&gt;3)-beta-D-Gal-(1-&gt;4)-beta-D-GlcNAc-(1-&gt;3)-beta-D-Gal-(1-&gt;4)-[alpha-L-Fuc-(1-&gt;3)]-beta-D-GlcNAc-(1-&gt;3)-beta-D-Gal-(1-&gt;4)-beta-D-GlcNAc + GDP-beta-L-fucose = alpha-Neu5Ac-(2-&gt;3)-beta-D-Gal-(1-&gt;4)-[alpha-L-Fuc-(1-&gt;3)]-beta-D-GlcNAc-(1-&gt;3)-beta-D-Gal-(1-&gt;4)-[alpha-L-Fuc-(1-&gt;3)]-beta-D-GlcNAc-(1-&gt;3)-beta-D-Gal-(1-&gt;4)-beta-D-GlcNAc + GDP + H(+). The enzyme catalyses alpha-Neu5Ac-(2-&gt;3)-beta-D-Gal-(1-&gt;4)-beta-D-GlcNAc-(1-&gt;3)-beta-D-Gal-(1-&gt;4)-beta-D-GlcNAc-(1-&gt;3)-beta-D-Gal-(1-&gt;4)-beta-D-GlcNAc + GDP-beta-L-fucose = alpha-Neu5Ac-(2-&gt;3)-beta-D-Gal-(1-&gt;4)-[alpha-L-Fuc-(1-&gt;3)]-beta-D-GlcNAc-(1-&gt;3)-beta-D-Gal-(1-&gt;4)-beta-D-GlcNAc-(1-&gt;3)-beta-D-Gal-(1-&gt;4)-beta-D-GlcNAc + GDP + H(+). The protein operates within protein modification; protein glycosylation. Inhibited by NaCl. Inhibited by GDP in a concentration dependent manner, with an IC(50) value of 93 uM. Also inhibited by GMP and GTP. Inhibited by N-ethylmaleimide. Activated by poly(ethylene glycol) by enhancing the thermal stability of FUT7. Activated by Mn2+, Ca2+, and Mg2+. Both panosialin A and B inhibit activity with IC(50) values of 4.8 and 5.3 ug/ml, respectively. Inhibited by gallic acid (GA) and (-)-epigallocatechin gallate (EGCG) in a time-dependent and irreversible manner with IC(50) values of 60 and 700 nM, respectively. In terms of biological role, catalyzes the transfer of L-fucose, from a guanosine diphosphate-beta-L-fucose, to the N-acetyl glucosamine (GlcNAc) of a distal alpha2,3 sialylated lactosamine unit of a glycoprotein or a glycolipid-linked sialopolylactosamines chain through an alpha-1,3 glycosidic linkage and participates in the final fucosylation step in the biosynthesis of the sialyl Lewis X (sLe(x)), a carbohydrate involved in cell and matrix adhesion during leukocyte trafficking and fertilization. In vitro, also synthesizes sialyl-dimeric-Lex structures, from VIM-2 structures and both di-fucosylated and trifucosylated structures from mono-fucosylated precursors. However does not catalyze alpha 1-3 fucosylation when an internal alpha 1-3 fucosylation is present in polylactosamine chain and the fucosylation rate of the internal GlcNAc residues is reduced once fucose has been added to the distal GlcNAc. Also catalyzes the transfer of a fucose from GDP-beta-fucose to the 6-sulfated a(2,3)sialylated substrate to produce 6-sulfo sLex mediating significant L-selectin-dependent cell adhesion. Through sialyl-Lewis(x) biosynthesis, can control SELE- and SELP-mediated cell adhesion with leukocytes and allows leukocytes tethering and rolling along the endothelial tissue thereby enabling the leukocytes to accumulate at a site of inflammation. May enhance embryo implantation through sialyl Lewis X (sLeX)-mediated adhesion of embryo cells to endometrium. May affect insulin signaling by up-regulating the phosphorylation and expression of some signaling molecules involved in the insulin-signaling pathway through SLe(x) which is present on the glycans of the INSRR alpha subunit. This chain is Alpha-(1,3)-fucosyltransferase 7, found in Homo sapiens (Human).